Reading from the N-terminus, the 1111-residue chain is Lon protease homolog, mitochondrial (1111 aa).

The transit peptide at 1-21 (MLRSSRSRLVTRNILLRQFKN) directs the protein to the mitochondrion. Disordered regions lie at residues 85–177 (IQLK…AKQP) and 288–311 (PPTS…ENNE). Basic and acidic residues predominate over residues 88-125 (KQDDKGKDIDQPESENRKKEEEQVPTEEKDNDTAKESE). Positions 126–135 (TSQQRDSVAE) are enriched in polar residues. Over residues 145 to 167 (GASGNGESSGNGSGDDGNNGSGN) the composition is skewed to gly residues. Residues 185-450 (VMALPISRRP…KALTVLKKEL (266 aa)) form the Lon N-terminal domain. The segment covering 294–306 (NLKDESDVSKSEG) has biased composition (basic and acidic residues). 602–609 (GPPGVGKT) provides a ligand contact to ATP. 2 stretches are compositionally biased toward basic and acidic residues: residues 819–835 (ENEE…KQSE) and 853–865 (ELIK…DNKG). The interval 819–866 (ENEEVKDQKDIKVKQSENKSSAEASTVESTTEENELIKTQKSHDNKGS) is disordered. The region spanning 899–1085 (STPPGVVMGL…EDVFQRLFGD (187 aa)) is the Lon proteolytic domain. Active-site residues include S991 and K1034.

Belongs to the peptidase S16 family. As to quaternary structure, homohexamer or homoheptamer. Organized in a ring with a central cavity.

The protein resides in the mitochondrion matrix. The enzyme catalyses Hydrolysis of proteins in presence of ATP.. ATP-dependent serine protease that mediates the selective degradation of misfolded, unassembled or oxidatively damaged polypeptides as well as certain short-lived regulatory proteins in the mitochondrial matrix. May also have a chaperone function in the assembly of inner membrane protein complexes. Participates in the regulation of mitochondrial gene expression and in the maintenance of the integrity of the mitochondrial genome. Binds to mitochondrial DNA in a site-specific manner. In Kluyveromyces lactis (strain ATCC 8585 / CBS 2359 / DSM 70799 / NBRC 1267 / NRRL Y-1140 / WM37) (Yeast), this protein is Lon protease homolog, mitochondrial.